A 218-amino-acid polypeptide reads, in one-letter code: MQIVDRSNLEASLKLALSPENNPKRNFVQSVEIIVTFKEVDMKKGDLKLREIVVLPKPPEKTKKVLVVPTIQQLEYAKKAEPNTILTKEELQKLQGNKRAIKKIARQNDWFLIAPDSMALVGRILGPALGPRGKFPTPLPNTADISEYILRFKRSTLVKTKDQPQTQVFIGTESQQIADLAENALAVLNVIESKGYAQKVRNIYVKTTMGKVVKVELR.

This sequence belongs to the universal ribosomal protein uL1 family. As to quaternary structure, part of the 50S ribosomal subunit.

Probably involved in E site tRNA release. Binds directly to 23S rRNA. Its function is as follows. Protein L1 is also a translational repressor protein, it controls the translation of its operon by binding to its mRNA. The chain is Large ribosomal subunit protein uL1 from Saccharolobus solfataricus (strain ATCC 35092 / DSM 1617 / JCM 11322 / P2) (Sulfolobus solfataricus).